Reading from the N-terminus, the 284-residue chain is Nucleoid occlusion protein (284 aa).

Positions 143–162 (EALAQRVGKSQSAIANKMRL) form a DNA-binding region, H-T-H motif.

The protein belongs to the ParB family.

The protein localises to the cytoplasm. The protein resides in the nucleoid. Functionally, effects nucleoid occlusion by binding relatively nonspecifically to DNA and preventing the assembly of the division machinery in the vicinity of the nucleoid, especially under conditions that disturb the cell cycle. It helps to coordinate cell division and chromosome segregation by preventing the formation of the Z ring through the nucleoid, which would cause chromosome breakage. In Listeria innocua serovar 6a (strain ATCC BAA-680 / CLIP 11262), this protein is Nucleoid occlusion protein.